The following is a 220-amino-acid chain: Adenylate kinase (220 aa).

10–15 contacts ATP; it reads GAGKGT. Residues 30 to 59 are NMP; that stretch reads STGDMLRAAVKAGTPLGVEAKGYMDAGKLV. AMP contacts are provided by residues T31, R36, 57 to 59, 85 to 88, and Q92; these read KLV and GFPR. The tract at residues 122–159 is LID; that stretch reads GRRTHPASGRTYHVKFNPPKVEGHDDVTGEPLIQRDDD. ATP is bound by residues R123 and 132-133; that span reads TY. AMP contacts are provided by R156 and R167. An ATP-binding site is contributed by G206.

Belongs to the adenylate kinase family. As to quaternary structure, monomer.

It localises to the cytoplasm. It carries out the reaction AMP + ATP = 2 ADP. It participates in purine metabolism; AMP biosynthesis via salvage pathway; AMP from ADP: step 1/1. In terms of biological role, catalyzes the reversible transfer of the terminal phosphate group between ATP and AMP. Plays an important role in cellular energy homeostasis and in adenine nucleotide metabolism. The polypeptide is Adenylate kinase (Burkholderia lata (strain ATCC 17760 / DSM 23089 / LMG 22485 / NCIMB 9086 / R18194 / 383)).